Reading from the N-terminus, the 354-residue chain is Kelch domain-containing protein 8B (354 aa).

Kelch repeat units follow at residues 1–31 (MAAGGGQAFAWQVFPPMPTCRVYGTVAHQDG), 32–79 (HLLV…VLGK), 81–127 (VLVV…ERDG), 128–175 (MVYA…LHGN), 176–222 (KIYV…MAEG), 224–281 (VFSL…SLGG), 282–329 (NIVA…QAGP), and 331–354 (LFVIGGVAQGPSQAVEALCLRDGV).

Its subcellular location is the cytoplasm. It localises to the midbody. In terms of biological role, involved in pinching off the separated nuclei at the cleavage furrow and in cytokinesis. Required for mitotic integrity and maintenance of chromosomal stability. Protects cells against mitotic errors, centrosomal amplification, micronucleus formation and aneuploidy. Plays a key role of midbody function involving abscission of the daughter cells during cytokinesis and appropriate chromosomal and nuclear segregation into the daughter cells. The protein is Kelch domain-containing protein 8B (Klhdc8b) of Rattus norvegicus (Rat).